The primary structure comprises 462 residues: Ribosomal protein uS12 methylthiotransferase RimO (462 aa).

The MTTase N-terminal domain occupies 10–125 (PRIGMVSLGC…VLDAVHRNLP (116 aa)). [4Fe-4S] cluster is bound by residues Cys-19, Cys-55, Cys-84, Cys-160, Cys-164, and Cys-167. The Radical SAM core domain maps to 146 to 388 (LTPRHYAYLK…AVAEALSSAK (243 aa)). The region spanning 390–462 (QRRVGATMQV…RGHDLLAQPI (73 aa)) is the TRAM domain.

It belongs to the methylthiotransferase family. RimO subfamily. It depends on [4Fe-4S] cluster as a cofactor.

It localises to the cytoplasm. It carries out the reaction L-aspartate(89)-[ribosomal protein uS12]-hydrogen + (sulfur carrier)-SH + AH2 + 2 S-adenosyl-L-methionine = 3-methylsulfanyl-L-aspartate(89)-[ribosomal protein uS12]-hydrogen + (sulfur carrier)-H + 5'-deoxyadenosine + L-methionine + A + S-adenosyl-L-homocysteine + 2 H(+). Catalyzes the methylthiolation of an aspartic acid residue of ribosomal protein uS12. The chain is Ribosomal protein uS12 methylthiotransferase RimO from Verminephrobacter eiseniae (strain EF01-2).